Here is a 39-residue protein sequence, read N- to C-terminus: Non-specific lipid-transfer protein (39 aa).

It belongs to the plant LTP family.

In terms of biological role, plant non-specific lipid-transfer proteins transfer phospholipids as well as galactolipids across membranes. May play a role in wax or cutin deposition in the cell walls of expanding epidermal cells and certain secretory tissues. In Musa acuminata (Banana), this protein is Non-specific lipid-transfer protein.